The sequence spans 368 residues: 4-hydroxy-3-methylbut-2-en-1-yl diphosphate synthase (flavodoxin) (368 aa).

4 residues coordinate [4Fe-4S] cluster: Cys-268, Cys-271, Cys-303, and Glu-310.

It belongs to the IspG family. [4Fe-4S] cluster is required as a cofactor.

It carries out the reaction (2E)-4-hydroxy-3-methylbut-2-enyl diphosphate + oxidized [flavodoxin] + H2O + 2 H(+) = 2-C-methyl-D-erythritol 2,4-cyclic diphosphate + reduced [flavodoxin]. The protein operates within isoprenoid biosynthesis; isopentenyl diphosphate biosynthesis via DXP pathway; isopentenyl diphosphate from 1-deoxy-D-xylulose 5-phosphate: step 5/6. Its function is as follows. Converts 2C-methyl-D-erythritol 2,4-cyclodiphosphate (ME-2,4cPP) into 1-hydroxy-2-methyl-2-(E)-butenyl 4-diphosphate. This Listeria monocytogenes serotype 4b (strain CLIP80459) protein is 4-hydroxy-3-methylbut-2-en-1-yl diphosphate synthase (flavodoxin).